Here is a 621-residue protein sequence, read N- to C-terminus: 1-deoxy-D-xylulose-5-phosphate synthase (621 aa).

Thiamine diphosphate-binding positions include H80 and 121–123 (GHS). D152 lines the Mg(2+) pocket. Residues 153-154 (GA), N181, Y288, and E370 each bind thiamine diphosphate. N181 is a binding site for Mg(2+).

This sequence belongs to the transketolase family. DXPS subfamily. As to quaternary structure, homodimer. Mg(2+) serves as cofactor. It depends on thiamine diphosphate as a cofactor.

The catalysed reaction is D-glyceraldehyde 3-phosphate + pyruvate + H(+) = 1-deoxy-D-xylulose 5-phosphate + CO2. It functions in the pathway metabolic intermediate biosynthesis; 1-deoxy-D-xylulose 5-phosphate biosynthesis; 1-deoxy-D-xylulose 5-phosphate from D-glyceraldehyde 3-phosphate and pyruvate: step 1/1. In terms of biological role, catalyzes the acyloin condensation reaction between C atoms 2 and 3 of pyruvate and glyceraldehyde 3-phosphate to yield 1-deoxy-D-xylulose-5-phosphate (DXP). The chain is 1-deoxy-D-xylulose-5-phosphate synthase from Serratia proteamaculans (strain 568).